Reading from the N-terminus, the 35-residue chain is SDPKIGDGCFGLPLDHIGSVSGLGCNRPVQNRPKK.

A disulfide bridge links Cys9 with Cys25.

Expressed by the venom gland.

It localises to the secreted. In terms of biological role, snake venom natriuretic peptide that exhibits vasoactive and probable hypotensive activity. Is only weakly active on natriuretic peptide receptor-C (NPR3). Stimulates cGMP production through the natriuretic peptide receptor 1 (NPR1) with moderate potencies for the rat NPR1 (EC(50)=1200 nM), and very weak potencies over human NPR1 (30% activation at 10 uM). In vivo, does not impact systolic and diastolic blood pressure, as well as heart rate, when intravenously injected in conscious rabbits. Does not affect the bradycardia due to cardiac afferent stimulation (Bezold-Jarisch reflex). The polypeptide is Natriuretic peptide TNPb (Oxyuranus microlepidotus (Inland taipan)).